A 634-amino-acid polypeptide reads, in one-letter code: DNA-directed RNA polymerase subunit gamma (634 aa).

Residues C74, C76, C89, and C92 each coordinate Zn(2+). Mg(2+)-binding residues include D471, D473, and D475.

This sequence belongs to the RNA polymerase beta' chain family. RpoC1 subfamily. In terms of assembly, in cyanobacteria the RNAP catalytic core is composed of 2 alpha, 1 beta, 1 beta', 1 gamma and 1 omega subunit. When a sigma factor is associated with the core the holoenzyme is formed, which can initiate transcription. The cofactor is Mg(2+). Zn(2+) serves as cofactor.

It carries out the reaction RNA(n) + a ribonucleoside 5'-triphosphate = RNA(n+1) + diphosphate. Its function is as follows. DNA-dependent RNA polymerase catalyzes the transcription of DNA into RNA using the four ribonucleoside triphosphates as substrates. In Prochlorococcus marinus (strain MIT 9215), this protein is DNA-directed RNA polymerase subunit gamma.